The chain runs to 422 residues: Immunoglobulin mu Fc receptor (422 aa).

The N-terminal stretch at 1–16 (MDFWLWLLYFLPVSGA) is a signal peptide. Residues 18–262 (RVLPEVQLNV…DRGLHIPIPE (245 aa)) lie on the Extracellular side of the membrane. Residues 24-121 (QLNVEWGGSI…GKTQKITLNV (98 aa)) form the Ig-like domain. Disulfide bonds link Cys-37-Cys-103 and Cys-49-Cys-58. Thr-91 carries the post-translational modification Phosphothreonine. Residues 263 to 283 (FHILIPTFLGFLLLVLLGLVV) form a helical membrane-spanning segment. Topologically, residues 284–422 (KRAIQRRRAS…YAPGPRSSCP (139 aa)) are cytoplasmic. Basic residues predominate over residues 290–308 (RRASSRRAGRLAMRRRGRG). Disordered regions lie at residues 290 to 367 (RRAS…QVLE) and 391 to 422 (VNLE…SSCP). Over residues 344–363 (LGPAEAPLLNAPASASPASP) the composition is skewed to low complexity.

In terms of assembly, interacts (via Ig-like domain) with IGHM (via CH4/Cmu4 domain), both secreted and membrane-bound IgM; the interaction is glycan-independent and multivalent theoretically involving up to eight binding sites for the IgM pentamer. In terms of processing, phosphorylated on both Tyr and Ser residues. O-glycosylated. Sialylated. O-linked glycans regulate trafficking to the plasma membrane. Expressed in pre-B cells, immature and mature B cells residing in primary and secondary lymphoid organs (at protein level). In the spleen, highly expressed in follicular and marginal zone B cells and at lower levels in germinal center B cells and plasma cells. Expressed in splenic dendritic cells and in granulocytes. In the peritoneum, expressed in B1-a and B-2 cell lineages. In the bone marrow, expressed in immature B cells and at a lower level in pro- and pre-B cells (at protein level). Expressed in M cells (at protein level).

The protein resides in the cell membrane. It localises to the early endosome membrane. Its subcellular location is the golgi apparatus. It is found in the trans-Golgi network membrane. The protein localises to the lysosome membrane. Functionally, high-affinity Fc receptor for immunoglobulin M (IgM), both secreted and membrane-bound IgM. Primarily regulates IgM transport and homeostasis. In lymphoid cells, enables exocytosis of membrane-bound IgM on the plasma membrane as well as endocytosis of IgM-antigen complexes toward lysosomes for degradation. In mucosal epithelium, mediates retrotranscytosis of antigen-IgM complexes across mucosal M cells toward antigen-presenting cells in mucosal lymphoid tissues. Triggers costimulatory signaling and mediates most of IgM effector functions involved in B cell development and primary immune response to infection. Likely limits tonic IgM BCR signaling to self-antigens for proper negative selection of autoreactive B cells in the bone marrow and for the maintenance of regulatory B cell pool in peripheral lymphoid organs. Mediates antibody responses to T cell-dependent and T cell-independent antigens and promotes induction of an efficient neutralizing IgG response. Engages in cross-talk with antigen-receptor signaling via the non-canonical NF-kappa-B, MAP kinases and calcium signaling pathways. The polypeptide is Immunoglobulin mu Fc receptor (Mus musculus (Mouse)).